We begin with the raw amino-acid sequence, 727 residues long: Two-component response regulator-like APRR7 (727 aa).

Residues 1–47 (MNANEEGEGSRYPITDRKTGETKFDRVESRTEKHSEEEKTNGITMDV) form a disordered region. A compositionally biased stretch (basic and acidic residues) spans 14-40 (ITDRKTGETKFDRVESRTEKHSEEEKT). Positions 79–197 (RVLLVENDDC…ELKILWQHVW (119 aa)) constitute a Response regulatory domain. Disordered stretches follow at residues 203–265 (SSGS…KKAV), 291–312 (NPEF…QEHD), 339–416 (KDEP…KTLD), 464–487 (SRYN…SLQD), 509–560 (ESLP…QPLP), and 606–670 (VNGS…SQRE). Residues 246-259 (ASDGSSDGSGAQSS) show a composition bias toward low complexity. Polar residues-rich tracts occupy residues 344–353 (SKTTGIMRQD), 467–487 (NPAS…SLQD), and 519–535 (VGSN…NNAF). Residues 538–555 (PGAPKVSSAGSSSVKHSS) are compositionally biased toward low complexity. Residues 641-657 (GKNGNGDGSGSGSGSGS) show a composition bias toward gly residues. The CCT domain maps to 669–711 (REAALTKFRQKRKERCFRKKVRYQSRKKLAEQRPRVRGQFVRK).

It belongs to the ARR-like family. In terms of processing, phosphorylated. Phosphorylation varies throughout the diurnal cycle.

The protein resides in the nucleus. Functionally, transcriptional repressor of CCA1 and LHY, and positive regulator of LWD1 and LWD2 expression. Represses the expression of other clock proteins and master regulators of plant growth, development and response to abiotic stress. Involved in the positive and negative feedback loops of the circadian clock. Controls photoperiodic flowering response and temperature compensation. Expression of several members of the ARR-like family is controlled by circadian rhythm. APRR9, APRR7, and APRR5 coordinately act on the upstream region of the target genes to repress their expression from noon until midnight. The particular coordinated sequential expression of APRR9, APRR7, APRR5, APRR3 and APPR1 result to circadian waves that may be at the basis of the endogenous circadian clock. In Arabidopsis thaliana (Mouse-ear cress), this protein is Two-component response regulator-like APRR7 (APRR7).